The sequence spans 65 residues: Large ribosomal subunit protein bL35 (65 aa).

It belongs to the bacterial ribosomal protein bL35 family.

In Rubrobacter xylanophilus (strain DSM 9941 / JCM 11954 / NBRC 16129 / PRD-1), this protein is Large ribosomal subunit protein bL35.